The following is a 228-amino-acid chain: 7-cyano-7-deazaguanine synthase (228 aa).

Position 7–17 (7–17 (LSGGLDSSTAL)) interacts with ATP. Zn(2+) is bound by residues Cys190, Cys202, Cys205, and Cys208.

The protein belongs to the QueC family. The cofactor is Zn(2+).

The enzyme catalyses 7-carboxy-7-deazaguanine + NH4(+) + ATP = 7-cyano-7-deazaguanine + ADP + phosphate + H2O + H(+). It participates in purine metabolism; 7-cyano-7-deazaguanine biosynthesis. In terms of biological role, catalyzes the ATP-dependent conversion of 7-carboxy-7-deazaguanine (CDG) to 7-cyano-7-deazaguanine (preQ(0)). In Acaryochloris marina (strain MBIC 11017), this protein is 7-cyano-7-deazaguanine synthase.